The sequence spans 83 residues: Apolipoprotein C-I, acidic form (83 aa).

The first 26 residues, 1–26 (MRLFLSLPVLVVVLSIVLEGPAPAQG), serve as a signal peptide directing secretion.

This sequence belongs to the apolipoprotein C1 family.

It localises to the secreted. The protein is Apolipoprotein C-I, acidic form (APOC1A) of Pan paniscus (Pygmy chimpanzee).